A 273-amino-acid polypeptide reads, in one-letter code: Large ribosomal subunit protein uL2cz/uL2cy (273 aa).

2 disordered regions span residues 1 to 25 (MAIH…VKSN) and 224 to 273 (NPVD…RRRK).

Belongs to the universal ribosomal protein uL2 family. Part of the 50S ribosomal subunit.

It is found in the plastid. It localises to the chloroplast. In Phalaenopsis aphrodite subsp. formosana (Moth orchid), this protein is Large ribosomal subunit protein uL2cz/uL2cy (rpl2-A).